The following is a 133-amino-acid chain: Large ribosomal subunit protein bL17 (133 aa).

Belongs to the bacterial ribosomal protein bL17 family. Part of the 50S ribosomal subunit. Contacts protein L32.

The chain is Large ribosomal subunit protein bL17 from Pseudoalteromonas translucida (strain TAC 125).